The sequence spans 386 residues: S-adenosylmethionine synthase (386 aa).

Glu-8 is a binding site for Mg(2+). Residue His-14 coordinates ATP. Residue Glu-42 participates in K(+) binding. The L-methionine site is built by Glu-55 and Gln-98. ATP is bound by residues 166–168 (DGK), 234–237 (SGRF), Asp-245, 251–252 (RK), Ala-268, Lys-272, and Lys-276. Asp-245 contributes to the L-methionine binding site. Lys-276 lines the L-methionine pocket.

Belongs to the AdoMet synthase family. In terms of assembly, homotetramer. Mn(2+) serves as cofactor. The cofactor is Mg(2+). Co(2+) is required as a cofactor. Requires K(+) as cofactor.

The protein resides in the cytoplasm. The enzyme catalyses L-methionine + ATP + H2O = S-adenosyl-L-methionine + phosphate + diphosphate. It participates in amino-acid biosynthesis; S-adenosyl-L-methionine biosynthesis; S-adenosyl-L-methionine from L-methionine: step 1/1. Functionally, catalyzes the formation of S-adenosylmethionine from methionine and ATP. The reaction comprises two steps that are both catalyzed by the same enzyme: formation of S-adenosylmethionine (AdoMet) and triphosphate, and subsequent hydrolysis of the triphosphate. The sequence is that of S-adenosylmethionine synthase (METK) from Ostreococcus tauri.